Here is a 330-residue protein sequence, read N- to C-terminus: Ribose-phosphate pyrophosphokinase (330 aa).

ATP-binding positions include 40 to 42 (DGE) and 99 to 100 (RQ). The Mg(2+) site is built by H133 and D174. The active site involves K197. D-ribose 5-phosphate contacts are provided by residues R199, D223, and 227–231 (DTGGT).

It belongs to the ribose-phosphate pyrophosphokinase family. Class I subfamily. Homohexamer. Mg(2+) is required as a cofactor.

The protein resides in the cytoplasm. It catalyses the reaction D-ribose 5-phosphate + ATP = 5-phospho-alpha-D-ribose 1-diphosphate + AMP + H(+). The protein operates within metabolic intermediate biosynthesis; 5-phospho-alpha-D-ribose 1-diphosphate biosynthesis; 5-phospho-alpha-D-ribose 1-diphosphate from D-ribose 5-phosphate (route I): step 1/1. In terms of biological role, involved in the biosynthesis of the central metabolite phospho-alpha-D-ribosyl-1-pyrophosphate (PRPP) via the transfer of pyrophosphoryl group from ATP to 1-hydroxyl of ribose-5-phosphate (Rib-5-P). The protein is Ribose-phosphate pyrophosphokinase of Ureaplasma parvum serovar 3 (strain ATCC 700970).